The primary structure comprises 648 residues: Acetyl-coenzyme A synthetase (648 aa).

CoA is bound by residues 190–193 (RGGR) and Thr310. Residues 386 to 388 (GEP), 410 to 415 (DTWWQT), Asp499, and Arg514 each bind ATP. Ser522 lines the CoA pocket. Arg525 contributes to the ATP binding site. The Mg(2+) site is built by Val536, His538, and Val541. Position 583 (Arg583) interacts with CoA. Residue Lys608 is modified to N6-acetyllysine.

The protein belongs to the ATP-dependent AMP-binding enzyme family. Mg(2+) serves as cofactor. Post-translationally, acetylated. Deacetylation by the SIR2-homolog deacetylase activates the enzyme.

It carries out the reaction acetate + ATP + CoA = acetyl-CoA + AMP + diphosphate. Functionally, catalyzes the conversion of acetate into acetyl-CoA (AcCoA), an essential intermediate at the junction of anabolic and catabolic pathways. AcsA undergoes a two-step reaction. In the first half reaction, AcsA combines acetate with ATP to form acetyl-adenylate (AcAMP) intermediate. In the second half reaction, it can then transfer the acetyl group from AcAMP to the sulfhydryl group of CoA, forming the product AcCoA. This chain is Acetyl-coenzyme A synthetase, found in Methylobacterium radiotolerans (strain ATCC 27329 / DSM 1819 / JCM 2831 / NBRC 15690 / NCIMB 10815 / 0-1).